Reading from the N-terminus, the 395-residue chain is Multiple organellar RNA editing factor 8, chloroplastic/mitochondrial (395 aa).

A chloroplast and mitochondrion-targeting transit peptide spans 1 to 56 (MATHTISRSILCRPAKSLSFLFTRSFASSAPLAKSPASSLLSRSRPLVAAFSSVFR). Residues 211-236 (ANERNRRNDRPRNNDRSRNFERRREN) are compositionally biased toward basic and acidic residues. The tract at residues 211-395 (ANERNRRNDR…RDGSGNPYQG (185 aa)) is disordered. Residues 240-300 (GPPPQRPPMG…GPRHPPPYGA (61 aa)) show a composition bias toward pro residues. Positions 313–334 (QNYGGTPPPNYGGAPPANNMGG) are enriched in low complexity. Residues 335–355 (APPPNYGGGPPPQYGAVPPPQ) show a composition bias toward pro residues. A compositionally biased stretch (low complexity) spans 356–385 (YGGAPPQNNNYQQQGSGMQQPQYQNNYPPN).

The protein belongs to the MORF family. In terms of assembly, interacts with protoporphyrinogen oxidase 1 PPOX1. Interacts with PCMP-H52/MEF10. Homodimer and heterodimers with MORF1/RIP8, MORF2/RIP2, MORF3/RIP3, MORF4/RIP4, MORF5/RIP5, MORF6/RIP6 and MORF7/RIP7. Interacts with RBG3/ORRM3. Interacts with PCMP-A2/PMD1. Interacts with ORRM1 and VAT3/OZ1. Interacts with PCMP-H13/MEF35. Interacts with RBG5/ORRM4. Interacts with ORRM6.

The protein localises to the mitochondrion. The protein resides in the plastid. It localises to the chloroplast. Functionally, involved in organellar RNA editing. Required for the processing of numerous RNA editing sites in mitochondria and plastids. Binds to the plastid RARE1 factor, a pentatricopeptide repeat-containing protein involved in RNA editing. In Arabidopsis thaliana (Mouse-ear cress), this protein is Multiple organellar RNA editing factor 8, chloroplastic/mitochondrial.